Reading from the N-terminus, the 348-residue chain is Cylicin-2 (348 aa).

Residues 25-347 (KKSWNQQHFA…DEKKDAKKKG (323 aa)) form a 31 X 3 AA repeats of K-K-X region. 2 disordered regions span residues 35-59 (LLFP…DNTV) and 101-348 (PTRT…KKGK). 4 stretches are compositionally biased toward basic and acidic residues: residues 103–159 (RTVE…DAKK), 166–217 (KDAE…EKDS), 238–267 (KADE…AKEI), and 276–342 (KPSS…EKKD). 3 repeat units span residues 157-184 (AKKD…EKGG), 185-212 (AKKD…EKGG), and 213-240 (TEKD…VKAD). Residues 157–240 (AKKDSKKGKK…AIELQAVKAD (84 aa)) form a 3 X approximate tandem repeats region.

Testis.

It localises to the cytoplasm. Its subcellular location is the cytoskeleton. The protein resides in the perinuclear theca. The protein localises to the calyx. Functionally, plays a role in the establishment of normal sperm morphology during spermatogenesis. It is required for acrosome attachment to the nuclear envelope, and proper manchette elongation and disassembly. The sequence is that of Cylicin-2 (CYLC2) from Homo sapiens (Human).